A 202-amino-acid polypeptide reads, in one-letter code: CASP-like protein 2B2 (202 aa).

The Cytoplasmic portion of the chain corresponds to 1 to 29 (MSYLGVGVSPGNVPVYHGMNLKVIDRRVR). Residues 30–50 (LAELVLRCVICALGVLAAVLV) form a helical membrane-spanning segment. At 51-72 (GTDTQVKEIFSIQKKARFTDMK) the chain is on the extracellular side. Residues 73-93 (ALVFLVVANGIAAAYSLVQGV) form a helical membrane-spanning segment. The Cytoplasmic portion of the chain corresponds to 94 to 118 (RCVVGMVKGSVLFSKPLAWVIFSGD). Residues 119–139 (QMMAYLTLSAVAAAVQSASFA) form a helical membrane-spanning segment. Residues 140 to 164 (KLGQPDLQWMKICNMYGKFCNQVGE) are Extracellular-facing. The helical transmembrane segment at 165-185 (GIASALLVSVSMVVLSCISSF) threads the bilayer. The Cytoplasmic portion of the chain corresponds to 186-202 (SLFRLYGGNKGKDGARW).

The protein belongs to the Casparian strip membrane proteins (CASP) family. As to quaternary structure, homodimer and heterodimers.

The protein localises to the cell membrane. The polypeptide is CASP-like protein 2B2 (Populus trichocarpa (Western balsam poplar)).